The following is a 76-amino-acid chain: Small ribosomal subunit protein uS17 (76 aa).

It belongs to the universal ribosomal protein uS17 family. As to quaternary structure, part of the 30S ribosomal subunit.

One of the primary rRNA binding proteins, it binds specifically to the 5'-end of 16S ribosomal RNA. The polypeptide is Small ribosomal subunit protein uS17 (Ruegeria sp. (strain TM1040) (Silicibacter sp.)).